Consider the following 262-residue polypeptide: Ferric siderophore reductase (262 aa).

Cys244, Cys245, Cys256, and Cys259 together coordinate [2Fe-2S] cluster.

As to quaternary structure, monomer. [2Fe-2S] cluster is required as a cofactor.

Its subcellular location is the cytoplasm. The protein resides in the cell inner membrane. With respect to regulation, displays pH dependent redox properties. SufD is necessary for the stability of FhuF. Siderophore-iron reductase which is involved in iron removal from the hydroxamate-type siderophores coprogen, ferrichrome and ferrioxamine B after their transport into the cell. Binds both the iron-loaded and the apo forms of ferrichrome. The sequence is that of Ferric siderophore reductase (fhuF) from Escherichia coli (strain K12).